The following is a 256-amino-acid chain: 1-(5-phosphoribosyl)-5-[(5-phosphoribosylamino)methylideneamino] imidazole-4-carboxamide isomerase (256 aa).

Asp8 functions as the Proton acceptor in the catalytic mechanism. The Proton donor role is filled by Asp130.

It belongs to the HisA/HisF family.

The protein resides in the cytoplasm. The enzyme catalyses 1-(5-phospho-beta-D-ribosyl)-5-[(5-phospho-beta-D-ribosylamino)methylideneamino]imidazole-4-carboxamide = 5-[(5-phospho-1-deoxy-D-ribulos-1-ylimino)methylamino]-1-(5-phospho-beta-D-ribosyl)imidazole-4-carboxamide. Its pathway is amino-acid biosynthesis; L-histidine biosynthesis; L-histidine from 5-phospho-alpha-D-ribose 1-diphosphate: step 4/9. The chain is 1-(5-phosphoribosyl)-5-[(5-phosphoribosylamino)methylideneamino] imidazole-4-carboxamide isomerase from Chlorobium luteolum (strain DSM 273 / BCRC 81028 / 2530) (Pelodictyon luteolum).